Here is a 354-residue protein sequence, read N- to C-terminus: WASH complex subunit 3 (354 aa).

A disordered region spans residues 76–354 (SSANVPVHNT…DDDDDDDESW (279 aa)). Residues 107–143 (IPPPPPPPPPPMTGVPPPPPPPPPPPISKSNIPPPPA) are compositionally biased toward pro residues. Acidic residues predominate over residues 150–159 (ESDDDDEDNN). Residues 213 to 244 (PQPPQPQPQSPSPQPPPPPTTTSSIPVPPPPF) are compositionally biased toward pro residues. Residues 251–260 (SDDDDDDDEG) show a composition bias toward acidic residues. Residues 277–290 (NNNSNSNSYSNNNN) show a composition bias toward low complexity. Composition is skewed to acidic residues over residues 293–307 (DDDD…DDDN) and 342–354 (DADD…DESW).

This sequence belongs to the CCDC53 family. Probable component of the WASH complex.

This chain is WASH complex subunit 3, found in Dictyostelium discoideum (Social amoeba).